The primary structure comprises 355 residues: cAMP-dependent protein kinase catalytic subunit PRKX (355 aa).

Position 1 is an N-acetylmethionine (Met-1). Residues 1 to 42 are disordered; sequence MEPPAGAAATVKDPDHDPVKTKVSAPAADPKPRTSSQKAGHS. The 255-residue stretch at 46 to 300 folds into the Protein kinase domain; that stretch reads WDTIATVGTG…AEDIKRHRWF (255 aa). ATP contacts are provided by residues 52–60 and Lys-75; that span reads VGTGTFGRV. The Proton acceptor role is filled by Asp-169. Phosphothreonine is present on Thr-200. An AGC-kinase C-terminal domain is found at 301–355; sequence RGVEWESVPQRKLKPPIVPKLSGDGDISNFETYPESELDKTPSVSDKDLETFKNF. A disordered region spans residues 316–355; it reads PIVPKLSGDGDISNFETYPESELDKTPSVSDKDLETFKNF. Residues 337-355 show a composition bias toward basic and acidic residues; the sequence is ELDKTPSVSDKDLETFKNF.

The protein belongs to the protein kinase superfamily. AGC Ser/Thr protein kinase family. cAMP subfamily. As to quaternary structure, like other cAMP-dependent protein kinases, the inactive holoenzyme is probably composed of 2 PRKX catalytic subunits and a dimer of regulatory subunits. Interacts (cAMP-dependent) specifically with the regulatory subunits PRKAR1A and PRKAR1B. Compared to other cAMP-dependent serine/threonine protein kinases, does not interact with the 2 other PKA regulatory subunits PRKAR2A and PRKAR2B. Interacts with PIN1 (via WW domain). Interacts with cAMP-dependent protein kinase inhibitor/PKI proteins; inhibits PRKX. Interacts with GPKOW. Interacts with SMAD6. Interacts with PKD1; involved in differentiation and controlled morphogenesis of the kidney. Phosphorylated; autophosphorylates in vitro. Widely expressed.

It localises to the cytoplasm. Its subcellular location is the nucleus. The catalysed reaction is L-seryl-[protein] + ATP = O-phospho-L-seryl-[protein] + ADP + H(+). It catalyses the reaction L-threonyl-[protein] + ATP = O-phospho-L-threonyl-[protein] + ADP + H(+). Binding of cAMP to the PRKAR1A or PRKAR1B regulatory subunits induces dissociation of the holoenzyme heterotetramer. The released monomeric PRKX is then active and able to phosphorylate its substrates. Functionally, serine/threonine protein kinase regulated by and mediating cAMP signaling in cells. Acts through phosphorylation of downstream targets that may include CREB, SMAD6 and PKD1 and has multiple functions in cellular differentiation and epithelial morphogenesis. Regulates myeloid cell differentiation through SMAD6 phosphorylation. Involved in nephrogenesis by stimulating renal epithelial cell migration and tubulogenesis. Also involved in angiogenesis through stimulation of endothelial cell proliferation, migration and vascular-like structure formation. The sequence is that of cAMP-dependent protein kinase catalytic subunit PRKX (Prkx) from Mus musculus (Mouse).